A 298-amino-acid polypeptide reads, in one-letter code: UTP--glucose-1-phosphate uridylyltransferase (298 aa).

Belongs to the UDPGP type 2 family.

It catalyses the reaction alpha-D-glucose 1-phosphate + UTP + H(+) = UDP-alpha-D-glucose + diphosphate. It participates in carbohydrate metabolism; nucleotide-sugar metabolism. Its pathway is capsule biogenesis; capsule polysaccharide biosynthesis. This is UTP--glucose-1-phosphate uridylyltransferase (galF) from Klebsiella pneumoniae.